Reading from the N-terminus, the 296-residue chain is Transcription repressor OFP3 (296 aa).

2 disordered regions span residues 27-115 (MSRS…SANA) and 131-196 (PSDQ…AHSS). Residues 60–69 (LSSTAHHPQA) are compositionally biased toward polar residues. The span at 78–88 (SFKRKIKRKTV) shows a compositional bias: basic residues. Over residues 92–115 (SSRLKLSTSSSLNHRSKSSSSANA) the composition is skewed to low complexity. Residues 136–159 (FVHDPEPHSSIDIKDELSVRKLDD) show a composition bias toward basic and acidic residues. In terms of domain architecture, OVATE spans 228-287 (IVLSSVDPEKDFRESMVEMIMENKMREQKDLEDLLACYLSLNSSEYHDVIIKAFENTWLH).

In terms of assembly, interacts with BLH1, BLH3, KNAT5 and KNAT7.

Its subcellular location is the nucleus. Its function is as follows. Transcriptional repressor that may regulate multiple aspects of plant growth and development through the regulation of BEL1-LIKE (BLH) and KNOX TALE (KNAT) homeodomain transcription factors. The polypeptide is Transcription repressor OFP3 (OFP3) (Arabidopsis thaliana (Mouse-ear cress)).